Here is a 177-residue protein sequence, read N- to C-terminus: Bifunctional protein PyrR (177 aa).

Substrate contacts are provided by residues 42 to 43 (SR), 104 to 112 (DDVLYTGRT), and Arg-137. A PRPP-binding motif is present at residues 100–112 (VVIVDDVLYTGRT).

It belongs to the purine/pyrimidine phosphoribosyltransferase family. PyrR subfamily.

It catalyses the reaction UMP + diphosphate = 5-phospho-alpha-D-ribose 1-diphosphate + uracil. In terms of biological role, regulates the transcription of the pyrimidine nucleotide (pyr) operon in response to exogenous pyrimidines. Functionally, also displays a weak uracil phosphoribosyltransferase activity which is not physiologically significant. In Fusobacterium nucleatum subsp. nucleatum (strain ATCC 25586 / DSM 15643 / BCRC 10681 / CIP 101130 / JCM 8532 / KCTC 2640 / LMG 13131 / VPI 4355), this protein is Bifunctional protein PyrR.